A 579-amino-acid chain; its full sequence is Glutamine--tRNA ligase (579 aa).

A 'HIGH' region motif is present at residues 41 to 51 (PEPNGYLHIGH). ATP-binding positions include 42 to 44 (EPN) and 48 to 54 (HIGHAKA). Residues Asp-74 and Tyr-218 each contribute to the L-glutamine site. ATP is bound by residues Thr-237, 285 to 286 (RL), and 293 to 295 (MSK). The 'KMSKS' region signature appears at 292–296 (VMSKR).

The protein belongs to the class-I aminoacyl-tRNA synthetase family. Monomer.

It localises to the cytoplasm. It catalyses the reaction tRNA(Gln) + L-glutamine + ATP = L-glutaminyl-tRNA(Gln) + AMP + diphosphate. This Xanthomonas axonopodis pv. citri (strain 306) protein is Glutamine--tRNA ligase.